The chain runs to 1939 residues: Myosin-1 (1939 aa).

Positions 33 to 82 (DAKTSVFVAEPKESFVKGTVQSREGGKVTVKTEAGATLTVKEDQVFPMNP) constitute a Myosin N-terminal SH3-like domain. Phosphothreonine occurs at positions 64 and 69. The Myosin motor domain maps to 86 to 782 (DKIEDMAMMT…LLGLLEEMRD (697 aa)). Lys130 is subject to N6,N6,N6-trimethyllysine. ATP is bound at residue 179 to 186 (GESGAGKT). Tyr389 bears the Phosphotyrosine mark. Residue Thr419 is modified to Phosphothreonine. Tyr424 is modified (phosphotyrosine). Residues 659–681 (LNKLMTNLRSTHPHFVRCIIPNE) are actin-binding. His757 is subject to Pros-methylhistidine. The interval 761–775 (KFGHTKVFFKAGLLG) is actin-binding. One can recognise an IQ domain in the interval 785-814 (LAQLITRTQARCRGFLARVEYQKMVERRES). Residues 843–1939 (LLKSAETEKE…EVHTKIISEE (1097 aa)) are a coiled coil. 2 positions are modified to phosphoserine: Ser1092 and Ser1096. Disordered regions lie at residues 1125 to 1147 (EIEAERASRAKAEKQRSDLSREL) and 1153 to 1172 (RLEEAGGATSAQIEMNKKRE). A compositionally biased stretch (basic and acidic residues) spans 1128–1147 (AERASRAKAEKQRSDLSREL). Phosphoserine is present on residues Ser1162 and Ser1237. Thr1241 is subject to Phosphothreonine. Position 1243 is a phosphoserine (Ser1243). Thr1255 is subject to Phosphothreonine. The residue at position 1261 (Ser1261) is a Phosphoserine. Thr1265 and Thr1286 each carry phosphothreonine. 4 positions are modified to phosphoserine: Ser1288, Ser1292, Ser1303, and Ser1306. Tyr1464 carries the phosphotyrosine modification. Thr1467 carries the post-translational modification Phosphothreonine. Ser1474 bears the Phosphoserine mark. Tyr1492 bears the Phosphotyrosine mark. Residue Ser1495 is modified to Phosphoserine. At Thr1501 the chain carries Phosphothreonine. At Ser1514 the chain carries Phosphoserine. Thr1517 carries the phosphothreonine modification. 7 positions are modified to phosphoserine: Ser1542, Ser1554, Ser1574, Ser1600, Ser1603, Ser1714, and Ser1726. Thr1730 and Thr1736 each carry phosphothreonine. Ser1739 is subject to Phosphoserine.

This sequence belongs to the TRAFAC class myosin-kinesin ATPase superfamily. Myosin family. In terms of assembly, muscle myosin is a hexameric protein that consists of 2 heavy chain subunits (MHC), 2 alkali light chain subunits (MLC) and 2 regulatory light chain subunits (MLC-2). Interacts with SLC26A5.

Its subcellular location is the cytoplasm. The protein resides in the myofibril. In terms of biological role, required for normal hearing. It plays a role in cochlear amplification of auditory stimuli, likely through the positive regulation of prestin (SLC26A5) activity and outer hair cell (OHC) electromotility. This chain is Myosin-1 (MYH1), found in Sus scrofa (Pig).